Reading from the N-terminus, the 904-residue chain is Protein translocase subunit SecA (904 aa).

ATP-binding positions include Gln89, 107 to 111 (GEGKT), and Asp502. The Zn(2+) site is built by Cys886, Cys888, Cys897, and His898.

It belongs to the SecA family. Monomer and homodimer. Part of the essential Sec protein translocation apparatus which comprises SecA, SecYEG and auxiliary proteins SecDF-YajC and YidC. Zn(2+) is required as a cofactor.

It is found in the cell inner membrane. Its subcellular location is the cytoplasm. It carries out the reaction ATP + H2O + cellular proteinSide 1 = ADP + phosphate + cellular proteinSide 2.. Functionally, part of the Sec protein translocase complex. Interacts with the SecYEG preprotein conducting channel. Has a central role in coupling the hydrolysis of ATP to the transfer of proteins into and across the cell membrane, serving both as a receptor for the preprotein-SecB complex and as an ATP-driven molecular motor driving the stepwise translocation of polypeptide chains across the membrane. This is Protein translocase subunit SecA from Rhizobium etli (strain CIAT 652).